A 1088-amino-acid polypeptide reads, in one-letter code: DNA mismatch repair protein MutS (1088 aa).

Residues 498–579 (PLDGITPPDD…SFEMPSLHGH (82 aa)) are disordered. A compositionally biased stretch (acidic residues) spans 537–546 (DLFDEEEEQE). 816-823 (GPNMSGKS) contributes to the ATP binding site. The interval 1000 to 1048 (LERRAPRSTPQPAPERTEERPAAGRPTARSHSAARGDPPRAPDGQLSLF) is disordered.

Belongs to the DNA mismatch repair MutS family.

This protein is involved in the repair of mismatches in DNA. It is possible that it carries out the mismatch recognition step. This protein has a weak ATPase activity. This is DNA mismatch repair protein MutS from Roseiflexus castenholzii (strain DSM 13941 / HLO8).